The following is a 361-amino-acid chain: Phospho-N-acetylmuramoyl-pentapeptide-transferase (361 aa).

Transmembrane regions (helical) follow at residues 21–41 (YITL…FLVG), 73–93 (TMGG…WADL), 97–117 (FVWV…VDDW), 134–154 (YFWQ…TATV), 168–188 (LVLP…IVGT), 200–220 (GLAI…AYVA), 237–257 (AGEL…FLWF), 264–284 (VFMG…VAVI), 289–309 (IVLF…MLQV), and 338–358 (QVVV…LSTL).

It belongs to the glycosyltransferase 4 family. MraY subfamily. Requires Mg(2+) as cofactor.

Its subcellular location is the cell inner membrane. The catalysed reaction is UDP-N-acetyl-alpha-D-muramoyl-L-alanyl-gamma-D-glutamyl-meso-2,6-diaminopimeloyl-D-alanyl-D-alanine + di-trans,octa-cis-undecaprenyl phosphate = di-trans,octa-cis-undecaprenyl diphospho-N-acetyl-alpha-D-muramoyl-L-alanyl-D-glutamyl-meso-2,6-diaminopimeloyl-D-alanyl-D-alanine + UMP. Its pathway is cell wall biogenesis; peptidoglycan biosynthesis. Functionally, catalyzes the initial step of the lipid cycle reactions in the biosynthesis of the cell wall peptidoglycan: transfers peptidoglycan precursor phospho-MurNAc-pentapeptide from UDP-MurNAc-pentapeptide onto the lipid carrier undecaprenyl phosphate, yielding undecaprenyl-pyrophosphoryl-MurNAc-pentapeptide, known as lipid I. This is Phospho-N-acetylmuramoyl-pentapeptide-transferase from Methylobacillus flagellatus (strain ATCC 51484 / DSM 6875 / VKM B-1610 / KT).